Here is a 431-residue protein sequence, read N- to C-terminus: Phosphoribosylamine--glycine ligase (431 aa).

An ATP-grasp domain is found at 108–315 (KDFLARHEIP…LVLLVEAAFA (208 aa)). Residue 134-195 (LQEKGAPIVI…EEFLDGEEAS (62 aa)) participates in ATP binding. Residues Glu-285 and Asn-287 each contribute to the Mg(2+) site.

It belongs to the GARS family. The cofactor is Mg(2+). It depends on Mn(2+) as a cofactor.

It catalyses the reaction 5-phospho-beta-D-ribosylamine + glycine + ATP = N(1)-(5-phospho-beta-D-ribosyl)glycinamide + ADP + phosphate + H(+). It participates in purine metabolism; IMP biosynthesis via de novo pathway; N(1)-(5-phospho-D-ribosyl)glycinamide from 5-phospho-alpha-D-ribose 1-diphosphate: step 2/2. This is Phosphoribosylamine--glycine ligase from Pseudomonas putida (strain ATCC 47054 / DSM 6125 / CFBP 8728 / NCIMB 11950 / KT2440).